The following is a 446-amino-acid chain: Tubulin beta-3 chain (446 aa).

The GTP site is built by Gln11, Glu69, Ser138, Gly142, Thr143, Gly144, Asn204, and Asn226. Position 69 (Glu69) interacts with Mg(2+). Residues 421–446 form a disordered region; sequence EYQQYQDATAEEEDYEEEEEDEEVAA. Residues 429–446 are compositionally biased toward acidic residues; that stretch reads TAEEEDYEEEEEDEEVAA.

It belongs to the tubulin family. In terms of assembly, dimer of alpha and beta chains. A typical microtubule is a hollow water-filled tube with an outer diameter of 25 nm and an inner diameter of 15 nM. Alpha-beta heterodimers associate head-to-tail to form protofilaments running lengthwise along the microtubule wall with the beta-tubulin subunit facing the microtubule plus end conferring a structural polarity. Microtubules usually have 13 protofilaments but different protofilament numbers can be found in some organisms and specialized cells. Mg(2+) serves as cofactor. Expressed in roots, second node, leaf sheaths, and suspension cultured cells.

It is found in the cytoplasm. It localises to the cytoskeleton. Functionally, tubulin is the major constituent of microtubules, a cylinder consisting of laterally associated linear protofilaments composed of alpha- and beta-tubulin heterodimers. Microtubules grow by the addition of GTP-tubulin dimers to the microtubule end, where a stabilizing cap forms. Below the cap, tubulin dimers are in GDP-bound state, owing to GTPase activity of alpha-tubulin. In Oryza sativa subsp. japonica (Rice), this protein is Tubulin beta-3 chain (TUBB3).